Here is a 253-residue protein sequence, read N- to C-terminus: U1 small nuclear ribonucleoprotein A (253 aa).

Residues 23–102 (VTIYINNLNE…KPMRIQYAKT (80 aa)) enclose the RRM 1 domain. A disordered region spans residues 111 to 140 (DGTFVPRERRKRNDEKPEKKQKREQHHDVS). In terms of domain architecture, RRM 2 spans 179 to 253 (NILFVQNLPH…NQMLISYAKK (75 aa)).

It belongs to the RRM U1 A/B'' family. In terms of assembly, component of the spliceosome where it is associated with snRNP U1.

The protein localises to the nucleus. It is found in the nucleolus. Involved in nuclear pre-mRNA splicing. In Oryza sativa subsp. indica (Rice), this protein is U1 small nuclear ribonucleoprotein A.